Here is a 214-residue protein sequence, read N- to C-terminus: Rho-related GTP-binding protein RhoJ (214 aa).

S-palmitoyl cysteine attachment occurs at residues cysteine 3 and cysteine 11. GTP contacts are provided by residues 31–36 (AVGKTC), 46–53 (FPEEYVPT), 75–79 (DTAGQ), 133–136 (TQID), and 177–178 (AL). Positions 50 to 58 (YVPTVFDHY) match the Effector region motif. Cysteine 211 is subject to Cysteine methyl ester. A lipid anchor (S-farnesyl cysteine) is attached at cysteine 211. A propeptide spans 212 to 214 (AII) (removed in mature form).

It belongs to the small GTPase superfamily. Rho family. Interacts with the CRIB domains of proteins such as Pak1 and Was/Wasp. Interacts with GLUL. Palmitoylated; regulates localization to the plasma membrane and may be mediated by GLUL. In terms of tissue distribution, highly expressed in heart with moderate levels in lung and liver. Very low levels detected in brain, spleen, skeletal muscle, kidney and testis.

The protein localises to the cell membrane. In terms of biological role, plasma membrane-associated small GTPase specifically involved in angiogenesis. Required for endothelial cell migration during vascular development via its interaction with GLUL. Elicits the formation of F-actin-rich structures, thereby regulating endothelial cell migration. This is Rho-related GTP-binding protein RhoJ (Rhoj) from Mus musculus (Mouse).